The following is an 88-amino-acid chain: Cell division topological specificity factor (88 aa).

It belongs to the MinE family.

Prevents the cell division inhibition by proteins MinC and MinD at internal division sites while permitting inhibition at polar sites. This ensures cell division at the proper site by restricting the formation of a division septum at the midpoint of the long axis of the cell. This Aeromonas salmonicida (strain A449) protein is Cell division topological specificity factor.